We begin with the raw amino-acid sequence, 330 residues long: Inactive hydroxysteroid dehydrogenase-like protein 1 (330 aa).

Alanine 2 is modified (N-acetylalanine). The required for mitochondria translocation stretch occupies residues 2–82; the sequence is AAVDSFYLLY…SGATDGIGKA (81 aa). NADP(+) contacts are provided by residues 74–80, aspartate 125, and lysine 222; that span reads GATDGIG.

This sequence belongs to the short-chain dehydrogenases/reductases (SDR) family. 17-beta-HSD 3 subfamily. Interacts with STYXL1.

The protein resides in the mitochondrion. This chain is Inactive hydroxysteroid dehydrogenase-like protein 1 (Hsdl1), found in Rattus norvegicus (Rat).